A 466-amino-acid polypeptide reads, in one-letter code: cAMP-dependent protein kinase regulatory subunit (466 aa).

Positions 25–231 (QFAANYFTKR…RLEKAVGKNF (207 aa)) are dimerization and phosphorylation. Low complexity predominate over residues 71–80 (ASLSHGSSKA). 4 disordered regions span residues 71 to 90 (ASLS…ISSS), 109 to 139 (STHI…PGIF), 154 to 179 (NSSV…VVNP), and 193 to 218 (SVSG…KSPE). Positions 81–90 (NASQSGISSS) are enriched in polar residues. Residues 109–118 (STHIVDHLDS) show a composition bias toward basic and acidic residues. Serine 193 carries the phosphoserine modification. Residues 200 to 218 (QPDHLDDWKPENFQEKSPE) show a composition bias toward basic and acidic residues. 3',5'-cyclic AMP-binding positions include 232–347 (LFNK…LLKN), glutamate 297, arginine 306, 350–466 (ILKS…RSKH), glutamate 416, and arginine 425.

The protein belongs to the cAMP-dependent kinase regulatory chain family. In terms of assembly, tetramer, composed of 2 regulatory (R) and 2 catalytic (C) subunits. In the presence of cAMP it dissociates into 2 active monomeric C subunits and an R dimer.

This chain is cAMP-dependent protein kinase regulatory subunit (PKAR), found in Kluyveromyces lactis (strain ATCC 8585 / CBS 2359 / DSM 70799 / NBRC 1267 / NRRL Y-1140 / WM37) (Yeast).